The following is a 142-amino-acid chain: Peptide methionine sulfoxide reductase MsrB (142 aa).

The MsrB domain occupies 3–126 (KEKLKKKLSL…NSAALRFVPF (124 aa)). The Nucleophile role is filled by Cys115.

It belongs to the MsrB Met sulfoxide reductase family.

It catalyses the reaction L-methionyl-[protein] + [thioredoxin]-disulfide + H2O = L-methionyl-(R)-S-oxide-[protein] + [thioredoxin]-dithiol. The polypeptide is Peptide methionine sulfoxide reductase MsrB (Lactococcus lactis subsp. lactis (strain IL1403) (Streptococcus lactis)).